The primary structure comprises 419 residues: GTPase Obg (419 aa).

The 158-residue stretch at 1 to 158 (MIFIDTAEII…RRLRLELKLV (158 aa)) folds into the Obg domain. In terms of domain architecture, OBG-type G spans 159-328 (AHVGLVGLPN…LVDVLFELIS (170 aa)). GTP contacts are provided by residues 165–172 (GLPNAGKS), 190–194 (FTTRS), 211–214 (DVPG), 281–284 (NKID), and 309–311 (SAA). Mg(2+) is bound by residues Ser-172 and Thr-192. One can recognise an OCT domain in the interval 344-419 (ELPPLPEDFS…VIHDKAFEIL (76 aa)).

Belongs to the TRAFAC class OBG-HflX-like GTPase superfamily. OBG GTPase family. As to quaternary structure, monomer. Mg(2+) serves as cofactor.

The protein resides in the cytoplasm. An essential GTPase which binds GTP, GDP and possibly (p)ppGpp with moderate affinity, with high nucleotide exchange rates and a fairly low GTP hydrolysis rate. Plays a role in control of the cell cycle, stress response, ribosome biogenesis and in those bacteria that undergo differentiation, in morphogenesis control. This is GTPase Obg from Coprothermobacter proteolyticus (strain ATCC 35245 / DSM 5265 / OCM 4 / BT).